Here is a 265-residue protein sequence, read N- to C-terminus: Transcription factor Spi-B-like (265 aa).

Residues 1 to 31 form a TAD1 (Acidic) region; it reads MLTLEASQLDGPHPSYMFSDSSFYDLDSCKP. The segment at 42 to 63 is TAD2; it reads AEPPTDPCAGWLELAEPGYEPF. A disordered region spans residues 127–160; that stretch reads TPLSEDDDFPTDAPALEVSDSDSDENLSPGGSLD. A DNA-binding region (ETS) is located at residues 169–252; sequence LRLYQFLLGL…VKKKLTYQFG (84 aa).

The protein belongs to the ETS family.

It is found in the nucleus. Functionally, may act as a sequence specific transcriptional activator. The polypeptide is Transcription factor Spi-B-like (Paleosuchus palpebrosus (Cuvier's smooth-fronted caiman)).